A 538-amino-acid polypeptide reads, in one-letter code: Solute carrier family 2, facilitated glucose transporter member 9 (538 aa).

Over Met-1 to Ser-34 the chain is Cytoplasmic. The residue at position 3 (Ser-3) is a Phosphoserine. A helical membrane pass occupies residues Phe-35–Tyr-54. Asn-55 and Asn-71 each carry an N-linked (GlcNAc...) asparagine glycan. Over Asn-55–Thr-88 the chain is Extracellular. A helical transmembrane segment spans residues Leu-89–Val-109. The Cytoplasmic portion of the chain corresponds to Lys-110–Ser-120. A helical transmembrane segment spans residues Thr-121–Gly-143. Topologically, residues Thr-144–Leu-148 are extracellular. The helical transmembrane segment at Ile-149 to Leu-170 threads the bilayer. Topologically, residues Asn-171–Ser-181 are cytoplasmic. Residues Leu-182–Leu-200 form a helical membrane-spanning segment. Topologically, residues Gly-201–Thr-211 are extracellular. A helical membrane pass occupies residues Trp-212 to Leu-233. The Cytoplasmic segment spans residues Pro-234 to Gln-297. The chain crosses the membrane as a helical span at residues Val-298–Tyr-319. At Thr-320–Lys-333 the chain is on the extracellular side. The helical transmembrane segment at Ile-334–Ile-356 threads the bilayer. At Glu-357–Arg-362 the chain is on the cytoplasmic side. The chain crosses the membrane as a helical span at residues Pro-363–Leu-385. Topologically, residues Gln-386–Pro-390 are extracellular. The chain crosses the membrane as a helical span at residues Trp-391–Leu-418. Residues Thr-419–Pro-429 lie on the Cytoplasmic side of the membrane. Residues Ala-430–Ile-453 traverse the membrane as a helical segment. The Extracellular segment spans residues Gln-454–Asp-458. A helical membrane pass occupies residues Ser-459–Leu-480. Over Pro-481–Val-538 the chain is Cytoplasmic. Positions Phe-495 to Val-538 are disordered. Polar residues predominate over residues Asn-518–Val-538.

Belongs to the major facilitator superfamily. Sugar transporter (TC 2.A.1.1) family. Post-translationally, N-glycosylated. As to expression, highly expressed in the intestine, with high expression in the jejunum and ileum, the segments of the intestine that perform the majority of urate excretion. Isoform 1: Widely expressed. Isoform 1: In kidney, expressed at low levels in proximal tubules. Isoform 2: Primarily expressed in liver and kidney; with specific expression in distal convoluted and connecting tubules of kidney.

Its subcellular location is the basolateral cell membrane. The protein resides in the apical cell membrane. It carries out the reaction urate(out) = urate(in). Functionally, high-capacity urate transporter, which may play a role in the urate reabsorption by proximal tubules. May have a residual high-affinity, low-capacity glucose and fructose transporter activity. Transports urate at rates 45- to 60-fold faster than glucose. Does not transport galactose. May mediate small uptake of adenine but not of other nucleobases. The protein is Solute carrier family 2, facilitated glucose transporter member 9 of Mus musculus (Mouse).